A 433-amino-acid polypeptide reads, in one-letter code: Alpha-(1,3)-fucosyltransferase 4 (433 aa).

At 1-52 (MAPARQELQHESRCRPSRTVDAWRAAVATRGRHMETPGYRRRTRCGGWGLPR) the chain is on the cytoplasmic side. The helical; Signal-anchor for type II membrane protein transmembrane segment at 53 to 74 (SVSSLAAVGLLCTALTTFICWG) threads the bilayer. At 75–433 (QLPPLPWASP…IHNLADWFQR (359 aa)) the chain is on the lumenal side. 2 N-linked (GlcNAc...) asparagine glycosylation sites follow: asparagine 117 and asparagine 218.

It belongs to the glycosyltransferase 10 family. As to expression, highest expression in stomach and colon. It is also expressed in the lung, testis, uterus, small intestine and to a lesser extent in spleen, and ovary. Present in trace amounts in brain, thymus, heart, smooth muscle, kidney and bone marrow. Not found in liver, salivary gland and pancreas.

It localises to the golgi apparatus. The protein resides in the golgi stack membrane. It catalyses the reaction a beta-D-galactosyl-(1-&gt;4)-N-acetyl-beta-D-glucosaminyl derivative + GDP-beta-L-fucose = a beta-D-galactosyl-(1-&gt;4)-[alpha-L-fucosyl-(1-&gt;3)]-N-acetyl-beta-D-glucosaminyl derivative + GDP + H(+). The catalysed reaction is an N-acetyl-alpha-neuraminyl-(2-&gt;3)-beta-D-galactosyl-(1-&gt;4)-N-acetyl-beta-D-glucosaminyl derivative + GDP-beta-L-fucose = an alpha-Neu5Ac-(2-&gt;3)-beta-D-Gal-(1-&gt;4)-[alpha-L-Fuc-(1-&gt;3)]-beta-D-GlcNAc derivative + GDP + H(+). The enzyme catalyses an alpha-Neu5Ac-(2-&gt;3)-beta-D-Gal-(1-&gt;4)-beta-D-GlcNAc-(1-&gt;3)-beta-D-Gal-(1-&gt;4)-beta-D-GlcNAc derivative + GDP-beta-L-fucose = an alpha-Neu5Ac-(2-&gt;3)-beta-D-Gal-(1-&gt;4)-beta-D-GlcNAc-(1-&gt;3)-beta-D-Gal-(1-&gt;4)-[alpha-L-Fuc-(1-&gt;3)]-beta-D-GlcNAc derivative + GDP + H(+). It carries out the reaction an alpha-Neu5Ac-(2-&gt;3)-beta-D-Gal-(1-&gt;4)-beta-D-GlcNAc6S derivative + GDP-beta-L-fucose = an alpha-Neu5Ac-(2-&gt;3)-beta-D-Gal-(1-&gt;4)-[alpha-L-Fuc-(1-&gt;3)]-beta-D-GlcNAc6S derivative + GDP + H(+). The protein operates within protein modification; protein glycosylation. Catalyzes alpha(1-&gt;3) linkage of fucosyl moiety transferred from GDP-beta-L-fucose to N-acetyl glucosamine (GlcNAc) within type 2 lactosamine (LacNAc, Gal-beta(1-&gt;4)GlcNAc) glycan attached to N- or O-linked glycoproteins. Robustly fucosylates nonsialylated distal LacNAc unit of the polylactosamine chain to form Lewis X antigen (CD15), a glycan determinant known to mediate important cellular functions in development and immunity. Fucosylates with lower efficiency sialylated LacNAc acceptors to form sialyl Lewis X and 6-sulfo sialyl Lewis X determinants that serve as recognition epitopes for C-type lectins. Together with FUT7 contributes to SELE, SELL and SELP selectin ligand biosynthesis and selectin-dependent lymphocyte homing, leukocyte migration and blood leukocyte homeostasis. In a cell type specific manner, may also fucosylate the internal LacNAc unit of the polylactosamine chain to form VIM-2 antigen that serves as recognition epitope for SELE. In Mus musculus (Mouse), this protein is Alpha-(1,3)-fucosyltransferase 4 (Fut4).